We begin with the raw amino-acid sequence, 728 residues long: 1,4-alpha-glucan branching enzyme GlgB (728 aa).

The active-site Nucleophile is the Asp-405. Glu-458 serves as the catalytic Proton donor.

It belongs to the glycosyl hydrolase 13 family. GlgB subfamily. In terms of assembly, monomer.

The catalysed reaction is Transfers a segment of a (1-&gt;4)-alpha-D-glucan chain to a primary hydroxy group in a similar glucan chain.. It functions in the pathway glycan biosynthesis; glycogen biosynthesis. Its function is as follows. Catalyzes the formation of the alpha-1,6-glucosidic linkages in glycogen by scission of a 1,4-alpha-linked oligosaccharide from growing alpha-1,4-glucan chains and the subsequent attachment of the oligosaccharide to the alpha-1,6 position. This Serratia proteamaculans (strain 568) protein is 1,4-alpha-glucan branching enzyme GlgB.